The sequence spans 598 residues: Mitogen-activated protein kinase 19 (598 aa).

Residues 25 to 316 (YRILEVIGKG…AAEALADPYF (292 aa)) enclose the Protein kinase domain. ATP is bound by residues 31–39 (IGKGSYGVV) and lysine 54. Catalysis depends on aspartate 151, which acts as the Proton acceptor. Threonine 187 bears the Phosphothreonine mark. A TXY motif is present at residues 187 to 189 (TDY). At tyrosine 189 the chain carries Phosphotyrosine. Threonine 192 carries the phosphothreonine modification. Positions 396-486 (GKSGPVIPPD…VTYENDRNLK (91 aa)) are disordered. Positions 414-425 (SAVHSSAVNSNA) are enriched in low complexity.

It belongs to the protein kinase superfamily. CMGC Ser/Thr protein kinase family. MAP kinase subfamily. Post-translationally, dually phosphorylated on Thr-187 and Tyr-189, which activates the enzyme.

It catalyses the reaction L-seryl-[protein] + ATP = O-phospho-L-seryl-[protein] + ADP + H(+). It carries out the reaction L-threonyl-[protein] + ATP = O-phospho-L-threonyl-[protein] + ADP + H(+). Activated by threonine and tyrosine phosphorylation. In Arabidopsis thaliana (Mouse-ear cress), this protein is Mitogen-activated protein kinase 19 (MPK19).